The primary structure comprises 316 residues: Spermidine synthase (316 aa).

In terms of domain architecture, PABS spans 25 to 262 (PGWFSEISPM…GVIGFMLCST (238 aa)). S-adenosyl 3-(methylsulfanyl)propylamine is bound at residue Gln-56. Tyr-86 provides a ligand contact to putrescine. Residues Gln-87, Asp-111, Glu-131, 162–163 (DG), and Asp-181 each bind S-adenosyl 3-(methylsulfanyl)propylamine. Residue Asp-181 is the Proton acceptor of the active site. Putrescine-binding positions include 181 to 184 (DSSD) and Tyr-250.

It belongs to the spermidine/spermine synthase family.

It carries out the reaction S-adenosyl 3-(methylsulfanyl)propylamine + putrescine = S-methyl-5'-thioadenosine + spermidine + H(+). It functions in the pathway amine and polyamine biosynthesis; spermidine biosynthesis; spermidine from putrescine: step 1/1. In Coffea arabica (Arabian coffee), this protein is Spermidine synthase.